The sequence spans 971 residues: Breast cancer type 2 susceptibility protein homolog (971 aa).

The span at 1 to 15 shows a compositional bias: polar residues; it reads MDQNGASGSHPNRLS. Disordered stretches follow at residues 1-30, 130-155, 349-395, and 420-466; these read MDQN…ATVS, SRKR…LSVQ, KLKL…DQPN, and MQCS…SSHQ. Residues 130–139 are compositionally biased toward basic residues; sequence SRKRDPKSHK. The span at 349–364 shows a compositional bias: basic and acidic residues; that stretch reads KLKLEPSSQKEQKSSK. 3 stretches are compositionally biased toward polar residues: residues 375–392, 420–432, and 453–466; these read SKQS…TILD, MQCS…SKNA, and KQTP…SSHQ. BRCA2 repeat units lie at residues 570-604, 671-705, and 746-780; these read AEPE…EFQS, NESQ…QSKA, and SETE…EFQA. The disordered stretch occupies residues 916 to 971; that stretch reads MERFAPKPSSTSTPLADRDLNRSKDCTKNRQDAEDMSPICMQPKKSRRLGLSRSRY. Over residues 931-948 the composition is skewed to basic and acidic residues; the sequence is ADRDLNRSKDCTKNRQDA. Positions 959–971 are enriched in basic residues; it reads KKSRRLGLSRSRY.

As to quaternary structure, interacts with Rad9. Interacts with spn-A/Rad51. Interacts with cyclin CycG.

It localises to the nucleus. In terms of biological role, involved in and required for double-strand break repair by meiotic and mitotic homologous recombination. During meiosis, has a dual role in the repair of meiotic double-stranded breaks and the efficient activation of the meiotic recombination checkpoint. The chain is Breast cancer type 2 susceptibility protein homolog from Drosophila melanogaster (Fruit fly).